The chain runs to 420 residues: Putative phosphate permease HI_1604 (420 aa).

12 helical membrane passes run 8 to 28, 49 to 69, 88 to 108, 112 to 132, 145 to 165, 185 to 205, 216 to 236, 250 to 270, 300 to 320, 343 to 363, 370 to 390, and 393 to 413; these read GSWL…GIGA, AIII…GEVT, ILAL…FIAT, WPVS…CITI, IVGS…AIFA, GPYY…KKGL, ETLI…HFYF, FGAV…AMAF, GGAL…VGLI, FAAQ…GLPI, VGAI…LTVI, and IISS…IIFY.

Belongs to the inorganic phosphate transporter (PiT) (TC 2.A.20) family.

It is found in the cell inner membrane. Functionally, potential transporter for phosphate. The protein is Putative phosphate permease HI_1604 of Haemophilus influenzae (strain ATCC 51907 / DSM 11121 / KW20 / Rd).